We begin with the raw amino-acid sequence, 645 residues long: Cytochrome c oxidase subunit 1 (645 aa).

Residues leucine 8–isoleucine 28 traverse the membrane as a helical segment. 2 residues coordinate Ca(2+): glutamate 31 and glycine 36. Histidine 54 is a binding site for Fe(II)-heme a. The next 8 helical transmembrane spans lie at leucine 56–isoleucine 76, leucine 90–phenylalanine 110, valine 247–isoleucine 267, valine 282–threonine 302, leucine 337–alanine 357, isoleucine 376–leucine 396, isoleucine 410–alanine 430, and leucine 438–methionine 458. Cu cation is bound at residue histidine 343. Positions histidine 343 to tyrosine 347 form a cross-link, 1'-histidyl-3'-tyrosine (His-Tyr). An O2-binding site is contributed by tyrosine 347. Histidine 392 and histidine 393 together coordinate Cu cation. Positions 470 and 471 each coordinate Mg(2+). 3 helical membrane-spanning segments follow: residues valine 475–leucine 495, phenylalanine 513–leucine 533, and leucine 555–phenylalanine 575. Heme a3 is bound at residue histidine 478. Histidine 480 serves as a coordination point for Fe(II)-heme a.

Belongs to the heme-copper respiratory oxidase family. In terms of assembly, component of the cytochrome c oxidase (complex IV, CIV), a multisubunit enzyme composed of a catalytic core of 3 subunits and several supernumerary subunits. The complex exists as a monomer or a dimer and forms supercomplexes (SCs) in the inner mitochondrial membrane with ubiquinol-cytochrome c oxidoreductase (cytochrome b-c1 complex, complex III, CIII). The cofactor is heme. Cu cation serves as cofactor.

Its subcellular location is the mitochondrion inner membrane. It carries out the reaction 4 Fe(II)-[cytochrome c] + O2 + 8 H(+)(in) = 4 Fe(III)-[cytochrome c] + 2 H2O + 4 H(+)(out). It functions in the pathway energy metabolism; oxidative phosphorylation. Its function is as follows. Component of the cytochrome c oxidase, the last enzyme in the mitochondrial electron transport chain which drives oxidative phosphorylation. The respiratory chain contains 3 multisubunit complexes succinate dehydrogenase (complex II, CII), ubiquinol-cytochrome c oxidoreductase (cytochrome b-c1 complex, complex III, CIII) and cytochrome c oxidase (complex IV, CIV), that cooperate to transfer electrons derived from NADH and succinate to molecular oxygen, creating an electrochemical gradient over the inner membrane that drives transmembrane transport and the ATP synthase. Cytochrome c oxidase is the component of the respiratory chain that catalyzes the reduction of oxygen to water. Electrons originating from reduced cytochrome c in the intermembrane space (IMS) are transferred via the dinuclear copper A center (CU(A)) of subunit 2 and heme A of subunit 1 to the active site in subunit 1, a binuclear center (BNC) formed by heme A3 and copper B (CU(B)). The BNC reduces molecular oxygen to 2 water molecules using 4 electrons from cytochrome c in the IMS and 4 protons from the mitochondrial matrix. In Paramecium tetraurelia, this protein is Cytochrome c oxidase subunit 1 (COI).